Here is a 313-residue protein sequence, read N- to C-terminus: Formate-nitrite transporter (313 aa).

At 1-46 (MTKGSKYTIDPISVKTACTSEESYIRCVEYGKGKAHYPNLSLLAKA) the chain is on the cytoplasmic side. Residues 47 to 67 (ILAGVFVGVCAHASGIAGGHF) traverse the membrane as a helical segment. The Extracellular segment spans residues 68–77 (YYHKLREHVG). The helical transmembrane segment at 78–98 (ISMSAFVYGFTFPIAFLCIIA) threads the bilayer. Residues 99–127 (TGSDLFTGNTLAVTTALLQRKVTLLEYLR) are Cytoplasmic-facing. The helical transmembrane segment at 128–148 (VMSISLFGNYVGAVSFAFFVS) threads the bilayer. The Extracellular portion of the chain corresponds to 149 to 184 (HLSGAFKKHEEIGKNHIFQFLNDIAEKKVSHTFVQC). The helical transmembrane segment at 185–205 (VCLAIGCNIFVCLAVYFVLTI) threads the bilayer. At 206-210 (KDGSG) the chain is on the cytoplasmic side. The helical transmembrane segment at 211–231 (MVFSVFFAVYAFAIAGYEHII) threads the bilayer. Residues 232–256 (ANMYTLNLALMIEANVDWTKVYVDN) lie on the Extracellular side of the membrane. A helical transmembrane segment spans residues 257–277 (LLPTLIGNYIAGAIVLACPLF). The Cytoplasmic portion of the chain corresponds to 278–313 (YIYRHSYSDYEKTRGDGGNSGLKSLSIEMQNGSSGR). Residues 290 to 313 (TRGDGGNSGLKSLSIEMQNGSSGR) are disordered. A compositionally biased stretch (polar residues) spans 298–313 (GLKSLSIEMQNGSSGR).

The protein belongs to the FNT transporter (TC 1.A.16) family. In terms of assembly, homopentamer.

Its subcellular location is the cell membrane. The protein localises to the vacuole membrane. The catalysed reaction is (S)-lactate(in) + H(+)(in) = (S)-lactate(out) + H(+)(out). It catalyses the reaction formate(in) + H(+)(in) = formate(out) + H(+)(out). The enzyme catalyses pyruvate(out) + H(+)(out) = pyruvate(in) + H(+)(in). It carries out the reaction acetate(out) + H(+)(out) = acetate(in) + H(+)(in). Inhibited by the Malaria Box compound MMV007839 and its derivatives BH296 and BH267.meta. Monocarboxylate-proton symporter that mediates the efflux of the waste product lactate in the intraerythrocytic parasites; active in acidic-to-neutral pH range. Transports L-lactate. This is Formate-nitrite transporter from Plasmodium vivax.